The chain runs to 229 residues: 2-C-methyl-D-erythritol 4-phosphate cytidylyltransferase (229 aa).

Belongs to the IspD/TarI cytidylyltransferase family. IspD subfamily.

The enzyme catalyses 2-C-methyl-D-erythritol 4-phosphate + CTP + H(+) = 4-CDP-2-C-methyl-D-erythritol + diphosphate. Its pathway is isoprenoid biosynthesis; isopentenyl diphosphate biosynthesis via DXP pathway; isopentenyl diphosphate from 1-deoxy-D-xylulose 5-phosphate: step 2/6. Its function is as follows. Catalyzes the formation of 4-diphosphocytidyl-2-C-methyl-D-erythritol from CTP and 2-C-methyl-D-erythritol 4-phosphate (MEP). The chain is 2-C-methyl-D-erythritol 4-phosphate cytidylyltransferase from Neisseria meningitidis serogroup A / serotype 4A (strain DSM 15465 / Z2491).